Reading from the N-terminus, the 377-residue chain is Pseudouridylate synthase RPUSD4, mitochondrial (377 aa).

Residues 1–35 (MAAPLLGSPGLQVLSMSSRTGKLFTPSSRSFCSRA) constitute a mitochondrion transit peptide. Residue Asp153 is part of the active site.

The protein belongs to the pseudouridine synthase RluA family. In terms of assembly, interacts with 16S mt-rRNA, mt-tRNA(Phe) and mt-tRNA(Met). Forms a regulatory protein-RNA complex, consisting of RCC1L, NGRN, RPUSD3, RPUSD4, TRUB2, FASTKD2 and 16S mt-rRNA.

It is found in the mitochondrion matrix. Its subcellular location is the nucleus. It localises to the cytoplasm. It catalyses the reaction uridine in 5S rRNA = pseudouridine in 5S rRNA. The catalysed reaction is a uridine in tRNA = a pseudouridine in tRNA. The enzyme catalyses a uridine in mRNA = a pseudouridine in mRNA. Its function is as follows. Catalyzes uridine to pseudouridine isomerization (pseudouridylation) of different mitochondrial RNA substrates. Acts on position 1397 in 16S mitochondrial ribosomal RNA (16S mt-rRNA). This modification is required for the assembly of 16S mt-rRNA into a functional mitochondrial ribosome. As a component of a functional protein-RNA module, consisting of RCC1L, NGRN, RPUSD3, RPUSD4, TRUB2, FASTKD2 and 16S mt-rRNA, controls 16S mt-rRNA abundance and is required for intra-mitochondrial translation. Acts on position 39 in mitochondrial tRNA(Phe). Also catalyzes pseudouridylation of mRNAs in nucleus: acts as a regulator of pre-mRNA splicing by mediating pseudouridylation of pre-mRNAs at locations associated with alternatively spliced regions. Pseudouridylation of pre-mRNAs near splice sites directly regulates mRNA splicing and mRNA 3'-end processing. The polypeptide is Pseudouridylate synthase RPUSD4, mitochondrial (Rattus norvegicus (Rat)).